We begin with the raw amino-acid sequence, 78 residues long: MKEANTRRYIHLCLVVVLVSTIITTEAEDDRLFCIRHHKYCGHRPNRCCSGLFCRCNTFGTNCRCQSKGALGKLISGK.

Positions 1-27 (MKEANTRRYIHLCLVVVLVSTIITTEA) are cleaved as a signal peptide. The propeptide occupies 28–31 (EDDR). Disulfide bonds link C34/C49, C41/C54, C48/C65, and C56/C63. At S76 the chain carries Serine amide.

Belongs to the xibalbin-13 family. As to expression, expressed by the venom gland.

Its subcellular location is the secreted. In terms of biological role, probable neurotoxin. Strongly inhibits voltage-gated potassium channels (Kv1.1/KCNA1, Kv1.2/KCNA2, Kv1.3/KCNA3, and Kv1.6/KCNA6) and mildly inhibits sodium channels (Nav1.2/SCN2A, Nav1.4/SCN4A, Nav1.5/SCN5A, Nav1.6/SCN8A, and BgNav). Induces activation of protein kinase A type II (PKA-II) and MAP kinase Erk1/2 in primary nociceptive and non-nociceptive sensory neurons. Does not show cytotoxic activity. Does not have an impact on Ca2+, cAMP, and NO signaling in the cell types analyzed. Does not interfere with the adhesion of leukocytes to endothelial cells. This is Xibalbin-13 1 from Xibalbanus tulumensis (Blind cave remipede).